A 73-amino-acid chain; its full sequence is Translation initiation factor IF-1 (73 aa).

Residues 1–73 (MPKKDGAIEI…SRGRIVYRYK (73 aa)) form the S1-like domain.

This sequence belongs to the IF-1 family. In terms of assembly, component of the 30S ribosomal translation pre-initiation complex which assembles on the 30S ribosome in the order IF-2 and IF-3, IF-1 and N-formylmethionyl-tRNA(fMet); mRNA recruitment can occur at any time during PIC assembly.

The protein localises to the cytoplasm. Its function is as follows. One of the essential components for the initiation of protein synthesis. Stabilizes the binding of IF-2 and IF-3 on the 30S subunit to which N-formylmethionyl-tRNA(fMet) subsequently binds. Helps modulate mRNA selection, yielding the 30S pre-initiation complex (PIC). Upon addition of the 50S ribosomal subunit IF-1, IF-2 and IF-3 are released leaving the mature 70S translation initiation complex. This Frankia alni (strain DSM 45986 / CECT 9034 / ACN14a) protein is Translation initiation factor IF-1.